The following is a 293-amino-acid chain: 4-hydroxy-tetrahydrodipicolinate synthase (293 aa).

Thr-45 contacts pyruvate. The active-site Proton donor/acceptor is Tyr-133. Lys-161 acts as the Schiff-base intermediate with substrate in catalysis. Ile-204 provides a ligand contact to pyruvate.

It belongs to the DapA family. In terms of assembly, homotetramer; dimer of dimers.

Its subcellular location is the cytoplasm. The enzyme catalyses L-aspartate 4-semialdehyde + pyruvate = (2S,4S)-4-hydroxy-2,3,4,5-tetrahydrodipicolinate + H2O + H(+). It participates in amino-acid biosynthesis; L-lysine biosynthesis via DAP pathway; (S)-tetrahydrodipicolinate from L-aspartate: step 3/4. Its function is as follows. Catalyzes the condensation of (S)-aspartate-beta-semialdehyde [(S)-ASA] and pyruvate to 4-hydroxy-tetrahydrodipicolinate (HTPA). The sequence is that of 4-hydroxy-tetrahydrodipicolinate synthase from Edwardsiella ictaluri (strain 93-146).